Reading from the N-terminus, the 320-residue chain is Malate dehydrogenase (320 aa).

NAD(+) is bound by residues 10–15 (GSGMIG) and aspartate 34. Residues arginine 83 and arginine 89 each contribute to the substrate site. NAD(+) contacts are provided by residues asparagine 96 and 119–121 (ITN). Asparagine 121 and arginine 152 together coordinate substrate. Histidine 176 (proton acceptor) is an active-site residue.

This sequence belongs to the LDH/MDH superfamily. MDH type 3 family.

The enzyme catalyses (S)-malate + NAD(+) = oxaloacetate + NADH + H(+). Catalyzes the reversible oxidation of malate to oxaloacetate. This Brucella abortus (strain S19) protein is Malate dehydrogenase.